The chain runs to 144 residues: UPF0547 protein C16orf87 homolog (144 aa).

Positions 33–112 are disordered; the sequence is HAKQSQRLPP…EEKEKQEKEV (80 aa). The segment covering 35–45 has biased composition (polar residues); the sequence is KQSQRLPPTSE. A compositionally biased stretch (basic residues) spans 50–62; that stretch reads PKRRRTERIKRER. Basic and acidic residues-rich tracts occupy residues 63 to 74 and 99 to 112; these read IHTAVNRDLENR and KKHEEEKEKQEKEV. Positions 94–122 form a coiled coil; the sequence is KTATTKKHEEEKEKQEKEVDMYANLSDEK.

This sequence belongs to the UPF0547 family.

In Xenopus laevis (African clawed frog), this protein is UPF0547 protein C16orf87 homolog.